A 395-amino-acid chain; its full sequence is Ribonuclease D (395 aa).

A 3'-5' exonuclease domain is found at 14–181; it reads LITKSEDLAA…VYETLRDRLE (168 aa). The HRDC domain maps to 219 to 300; the sequence is NRRYLGLLRA…AEARGLPDAD (82 aa).

Belongs to the RNase D family. A divalent metal cation is required as a cofactor.

Its subcellular location is the cytoplasm. The enzyme catalyses Exonucleolytic cleavage that removes extra residues from the 3'-terminus of tRNA to produce 5'-mononucleotides.. In terms of biological role, exonuclease involved in the 3' processing of various precursor tRNAs. Initiates hydrolysis at the 3'-terminus of an RNA molecule and releases 5'-mononucleotides. This chain is Ribonuclease D, found in Granulibacter bethesdensis (strain ATCC BAA-1260 / CGDNIH1).